The following is a 398-amino-acid chain: NADH-ubiquinone oxidoreductase 49 kDa subunit (398 aa).

Belongs to the complex I 49 kDa subunit family.

It is found in the mitochondrion. It catalyses the reaction a ubiquinone + NADH + 5 H(+)(in) = a ubiquinol + NAD(+) + 4 H(+)(out). Core subunit of the mitochondrial membrane respiratory chain NADH dehydrogenase (Complex I) that is believed to belong to the minimal assembly required for catalysis. Complex I functions in the transfer of electrons from NADH to the respiratory chain. The immediate electron acceptor for the enzyme is believed to be ubiquinone. Component of the iron-sulfur (IP) fragment of the enzyme. Component of the iron-sulfur (IP) fragment of the enzyme. The polypeptide is NADH-ubiquinone oxidoreductase 49 kDa subunit (NAD7) (Pylaiella littoralis (Seaweed)).